The sequence spans 574 residues: Proline--tRNA ligase (574 aa).

It belongs to the class-II aminoacyl-tRNA synthetase family. ProS type 1 subfamily. As to quaternary structure, homodimer.

The protein localises to the cytoplasm. It carries out the reaction tRNA(Pro) + L-proline + ATP = L-prolyl-tRNA(Pro) + AMP + diphosphate. Catalyzes the attachment of proline to tRNA(Pro) in a two-step reaction: proline is first activated by ATP to form Pro-AMP and then transferred to the acceptor end of tRNA(Pro). As ProRS can inadvertently accommodate and process non-cognate amino acids such as alanine and cysteine, to avoid such errors it has two additional distinct editing activities against alanine. One activity is designated as 'pretransfer' editing and involves the tRNA(Pro)-independent hydrolysis of activated Ala-AMP. The other activity is designated 'posttransfer' editing and involves deacylation of mischarged Ala-tRNA(Pro). The misacylated Cys-tRNA(Pro) is not edited by ProRS. This Hahella chejuensis (strain KCTC 2396) protein is Proline--tRNA ligase.